The chain runs to 315 residues: Malate dehydrogenase (315 aa).

Residues Gly-11–Gly-16 and Asp-35 each bind NAD(+). Residues Arg-84 and Arg-90 each contribute to the substrate site. NAD(+) contacts are provided by residues Asn-97 and Val-120–Asn-122. 2 residues coordinate substrate: Asn-122 and Arg-153. Residue His-177 is the Proton acceptor of the active site.

The protein belongs to the LDH/MDH superfamily. MDH type 3 family.

It catalyses the reaction (S)-malate + NAD(+) = oxaloacetate + NADH + H(+). Functionally, catalyzes the reversible oxidation of malate to oxaloacetate. In Thermosulfidibacter takaii (strain DSM 17441 / JCM 13301 / NBRC 103674 / ABI70S6), this protein is Malate dehydrogenase.